The sequence spans 725 residues: Catalase-peroxidase (725 aa).

Residues Met-1–Gln-20 form a disordered region. The segment at residues Trp-91 to Tyr-215 is a cross-link (tryptophyl-tyrosyl-methioninium (Trp-Tyr) (with M-241)). The active-site Proton acceptor is His-92. A cross-link (tryptophyl-tyrosyl-methioninium (Tyr-Met) (with W-91)) is located at residues Tyr-215–Met-241. His-256 contacts heme b.

Belongs to the peroxidase family. Peroxidase/catalase subfamily. Homodimer or homotetramer. Heme b serves as cofactor. Post-translationally, formation of the three residue Trp-Tyr-Met cross-link is important for the catalase, but not the peroxidase activity of the enzyme.

It catalyses the reaction H2O2 + AH2 = A + 2 H2O. It carries out the reaction 2 H2O2 = O2 + 2 H2O. In terms of biological role, bifunctional enzyme with both catalase and broad-spectrum peroxidase activity. In Janthinobacterium sp. (strain Marseille) (Minibacterium massiliensis), this protein is Catalase-peroxidase.